The chain runs to 638 residues: Signal recognition particle receptor subunit alpha (638 aa).

2 disordered regions span residues 132–244 (APTT…GKKA) and 283–316 (GTGS…TKGT). Composition is skewed to basic and acidic residues over residues 137-146 (KKFEDSEKAK) and 153-165 (IETR…EKAK). Position 177 is a phosphoserine (serine 177). Basic and acidic residues predominate over residues 204-239 (LSKEELIRRKREEFIQKHGRGMEKSNKSTKSDAPKE). The residue at position 284 (threonine 284) is a Phosphothreonine. Serine 296, serine 297, and serine 298 each carry phosphoserine. A compositionally biased stretch (polar residues) spans 304-314 (AQNSTKPSATK). The NG domain stretch occupies residues 419 to 636 (YVVTFCGVNG…NAKAVVAALM (218 aa)). 425 to 432 (GVNGVGKS) contacts GTP. Serine 473 is modified (phosphoserine). Residue 520-524 (DTAGR) participates in GTP binding. Residue threonine 578 is modified to Phosphothreonine. Residue 588–591 (TKFD) coordinates GTP.

It belongs to the GTP-binding SRP family. In terms of assembly, heterodimer with SRPRB. Interacts with the signal recognition particle (SRP) complex subunit SRP54. As to quaternary structure, (Microbial infection) May interact with Zika virus strain Mr-766 non-structural protein 4A/NS4A. May interact with Zika virus French Polynesia 10087PF/2013 non-structural protein 4A/NS4A. (Microbial infection) May interact with Dengue virus DENV2 16681 non-structural protein 4A/NS4A.

It is found in the endoplasmic reticulum membrane. Component of the signal recognition particle (SRP) complex receptor (SR). Ensures, in conjunction with the SRP complex, the correct targeting of the nascent secretory proteins to the endoplasmic reticulum membrane system. Forms a guanosine 5'-triphosphate (GTP)-dependent complex with the SRP subunit SRP54. SRP receptor compaction and GTPase rearrangement drive SRP-mediated cotranslational protein translocation into the ER. This chain is Signal recognition particle receptor subunit alpha, found in Homo sapiens (Human).